The chain runs to 479 residues: Pre-glycoprotein polyprotein GP complex (479 aa).

A lipid anchor (N-myristoyl glycine; by host) is attached at Gly2. Residues 2–17 (GQLISFFQDIPIFFEE) lie on the Extracellular side of the membrane. The chain crosses the membrane as a helical span at residues 18-32 (ALNVALAVVTLLAII). A topological domain (cytoplasmic) is located at residue Lys33. Residues 34-53 (GIVNVWKSGILQLFVFLVLA) traverse the membrane as a helical segment. Extracellular loops occupy residues 54–58 (GRSCS) and 59–418 (FKVG…TLVD). Position 57 (Cys57) interacts with Zn(2+). Cystine bridges form between Cys85-Cys221, Cys265-Cys278, and Cys287-Cys296. 5 N-linked (GlcNAc...) asparagine; by host glycosylation sites follow: Asn88, Asn125, Asn174, Asn202, and Asn214. 5 N-linked (GlcNAc...) asparagine; by host glycosylation sites follow: Asn314, Asn351, Asn359, Asn376, and Asn381. An intrachain disulfide couples Cys350 to Cys371. A helical transmembrane segment spans residues 419–439 (LCFWSAIFFTTSLFLHLVGFP). Over 440 to 479 (THRHIQGDPCPLPHRLDRNGACRCGRFQKLGKQVTWKRKH) the chain is Cytoplasmic. Zn(2+)-binding residues include His441, His443, Cys449, His453, Cys461, Cys463, and His479.

It belongs to the arenaviridae GPC protein family. As to quaternary structure, homotetramer; disulfide-linked. Homotetramer. GP2 homotetramers bind through ionic interactions with GP1 homotetramers to form the GP complex together with the stable signal peptide. The GP-C polyprotein interacts with the host protease MBTPS1/SKI-1 resulting in the polyprotein processing. Post-translationally, specific enzymatic cleavages in vivo yield mature proteins. GP-C polyprotein is cleaved in the endoplasmic reticulum by the host protease MBTPS1. Only cleaved glycoprotein is incorporated into virions. The SSP remains stably associated with the GP complex following cleavage by signal peptidase and plays crucial roles in the trafficking of GP through the secretory pathway. In terms of processing, myristoylation is necessary for GP2-mediated fusion activity.

The protein resides in the virion membrane. The protein localises to the host endoplasmic reticulum membrane. It is found in the host Golgi apparatus membrane. Its subcellular location is the host cell membrane. Functionally, interacts with the host receptor. Mediates virus attachment to host TFRC. This attachment induces virion internalization predominantly through clathrin-mediated endocytosis. Class I viral fusion protein that directs fusion of viral and host endosomal membranes, leading to delivery of the nucleocapsid into the cytoplasm. Membrane fusion is mediated by irreversible conformational changes induced upon acidification in the endosome. In terms of biological role, stable signal peptide (SSP): cleaved and functions as a signal peptide. In addition, it is also retained as the third component of the GP complex. The SSP is required for efficient glycoprotein expression, post-translational maturation cleavage of GP1 and GP2, glycoprotein transport to the cell surface plasma membrane, formation of infectious virus particles, and acid pH-dependent glycoprotein-mediated cell fusion. In Homo sapiens (Human), this protein is Pre-glycoprotein polyprotein GP complex.